Here is a 234-residue protein sequence, read N- to C-terminus: MVDQIRSPSWKSGFPSHQHQQGSYWTQGSTSSYLSTAKTAGVLGDVAEKANKIAPILTTAAVIYEMYQVGKEVKKDYHHGTTRNTIKTVATTATTYASASAAALAGSSIGSAIFPGIGTIFGGIIGGIAGGLFGGHVAETASEQILTHVKYDVTTLTCKECGKDYDWKKYEEAQGVCSCQLQIVLSNDAATKLCAILAEKIQSPSQTSNYAFNSYLCYYYLHIFACLNKILNHK.

A disordered region spans residues 1 to 23 (MVDQIRSPSWKSGFPSHQHQQGS).

This is an uncharacterized protein from Caenorhabditis elegans.